The following is a 534-amino-acid chain: Autophagic-related protein 16.2 (534 aa).

WD repeat units lie at residues T243–S281, G288–S329, G330–S368, V371–S411, E413–L452, K459–V498, and S504–R534.

The protein belongs to the WD repeat tipD family. As to quaternary structure, homodimer (via N-terminus). Most likely a component of a complex at least containing atg-5, lgg-3, atg-16.1 and/or atg-16.2. Interacts (via N-terminus) with atg-16.1 (via N-terminus). Interacts (via N-terminus) with atg-5. Interacts (via WD 5-6 repeats) with lgg-2; the interaction is direct. Expressed in neurons, pharyngeal muscles, body wall muscle cells and intestinal cells.

Its subcellular location is the cytoplasm. The protein localises to the cell membrane. Most likely a component of the atg-5-atg-12-atg-16.1/atg-16.2 complex, which is recruited to the preautophagosomal membrane and associates with lgg-2 to promote autophagosome formation. Plays a role in the recruitment of lipidated lgg-1 probably to the autophagosome membrane to promote autophagosome formation. Furthermore, association with atg-5 is required for the nucleation of lgg-1 positive autophagosomes. Although its role in autophagosome formation may be distinct to the role of atg-16.2, it functions in a partially redundant manner with atg-16.1 to regulate autophagic processes. In a daf-18/PTEN- and daf-16/FOXO-dependent manner, required for maintaining the numbers of germ stem cell progenitors in the gonad during the late phases of larval development. The polypeptide is Autophagic-related protein 16.2 (Caenorhabditis elegans).